We begin with the raw amino-acid sequence, 194 residues long: Putative adenylate kinase (194 aa).

Positions 16, 18, 19, 20, and 21 each coordinate ATP. Residues 36 to 59 (SVGELLAGTPYVTYIPELDTYEIV) form an NMP region. The segment at 108 to 118 (RRGWPLKKILD) is LID. ATP is bound at residue R109.

The protein belongs to the adenylate kinase family. AK6 subfamily. In terms of assembly, interacts with uS11. Not a structural component of 40S pre-ribosomes, but transiently interacts with them by binding to uS11.

It catalyses the reaction AMP + ATP = 2 ADP. The catalysed reaction is ATP + H2O = ADP + phosphate + H(+). In terms of biological role, broad-specificity nucleoside monophosphate (NMP) kinase that catalyzes the reversible transfer of the terminal phosphate group between nucleoside triphosphates and monophosphates. Also has ATPase activity. Involved in the late maturation steps of the 30S ribosomal particles, specifically 16S rRNA maturation. While NMP activity is not required for ribosome maturation, ATPase activity is. Associates transiently with small ribosomal subunit protein uS11. ATP hydrolysis breaks the interaction with uS11. May temporarily remove uS11 from the ribosome to enable a conformational change of the ribosomal RNA that is needed for the final maturation step of the small ribosomal subunit. The sequence is that of Putative adenylate kinase from Pyrobaculum aerophilum (strain ATCC 51768 / DSM 7523 / JCM 9630 / CIP 104966 / NBRC 100827 / IM2).